A 338-amino-acid chain; its full sequence is S-adenosylmethionine:tRNA ribosyltransferase-isomerase (338 aa).

The protein belongs to the QueA family. Monomer.

The protein localises to the cytoplasm. It carries out the reaction 7-aminomethyl-7-carbaguanosine(34) in tRNA + S-adenosyl-L-methionine = epoxyqueuosine(34) in tRNA + adenine + L-methionine + 2 H(+). Its pathway is tRNA modification; tRNA-queuosine biosynthesis. Transfers and isomerizes the ribose moiety from AdoMet to the 7-aminomethyl group of 7-deazaguanine (preQ1-tRNA) to give epoxyqueuosine (oQ-tRNA). This Francisella philomiragia subsp. philomiragia (strain ATCC 25017 / CCUG 19701 / FSC 153 / O#319-036) protein is S-adenosylmethionine:tRNA ribosyltransferase-isomerase.